The sequence spans 297 residues: Transmembrane protein 169 (297 aa).

The disordered stretch occupies residues 1–88 (MEESAPVESQ…EGEDFLDYPG (88 aa)). Residues 1–159 (MEESAPVESQ…CQVGADQGPH (159 aa)) are Extracellular-facing. The span at 22 to 31 (RRAVAAVLAL) shows a compositional bias: low complexity. Composition is skewed to acidic residues over residues 61-70 (KTDEEPEESE) and 78-88 (EEGEDFLDYPG). A helical transmembrane segment spans residues 160-180 (VVLWTLVCLPVVFVLSFVVSF). Topologically, residues 181–210 (YYGTITWYNIFLVYNEERTFWHKISCCPCL) are cytoplasmic. A helical transmembrane segment spans residues 211-231 (ILFYPVLIMTMASSLGLYAAV). Residues 232–297 (AQLSWSWAAW…PIQEVETSTV (66 aa)) are Extracellular-facing.

The protein resides in the membrane. In Mus musculus (Mouse), this protein is Transmembrane protein 169 (Tmem169).